Here is a 1000-residue protein sequence, read N- to C-terminus: C-module-binding factor A (1000 aa).

Positions 113–280 constitute a JmjC domain; the sequence is PREWQEYLSH…ISYFSSLPHT (168 aa). The PHD-type; atypical zinc finger occupies 489–544; the sequence is KIKCHRCEKRFKKFSIIFCTNCNARFCEQCVVNTFGQNFQVLMKRNEWECFCCKGL. The RING-type; degenerate zinc-finger motif lies at 492–542; sequence CHRCEKRFKKFSIIFCTNCNARFCEQCVVNTFGQNFQVLMKRNEWECFCCK. Disordered regions lie at residues 561-647 and 660-818; these read RILN…SSYS and SYGS…KNLK. Composition is skewed to low complexity over residues 574–647, 660–683, 700–710, 732–751, and 760–789; these read NNNN…SSYS, SYGS…NNNN, SSSSGSGSSNS, NNNN…NNHH, and NNNN…STST. Basic and acidic residues predominate over residues 805 to 818; sequence DNDKPKGRPPKNLK. A DNA-binding region (a.T hook) is located at residues 810 to 818; it reads KGRPPKNLK.

As to quaternary structure, monomer.

It is found in the nucleus. Functionally, transcriptional regulator involved in phagocytosis and pinocytosis. Both activates and represses transcription. Regulates expression of acaA, carA, pkaC, csaA, cotB and lagC. Promotes amplification of the tRNA gene-associated retrotransposon TRE5-A, a mobile genetic element formerly called as Dictyostelium repetitive element (DRE). Suppresses agnC and agnE encoding argonaute proteins which are part of a RNA interference pathway controlling TRE5-A amplification. Required for amplification of both sense and antisense RNA transcripts, but does not activate their promoters found in A-module and C-module of the TRE5-A, respectively. Nevertheless, binds to distinct DNA sequences containing A and T stretches within the C-module in vitro. This is C-module-binding factor A from Dictyostelium discoideum (Social amoeba).